Here is a 412-residue protein sequence, read N- to C-terminus: Ornithine cyclodeaminase (412 aa).

NAD(+) is bound by residues asparagine 237, alanine 238, aspartate 316, threonine 348, methionine 349, leucine 350, histidine 351, aspartate 369, aspartate 392, and valine 393.

The protein belongs to the AgrE/ArgZ ornithine cyclodeaminase family. NAD(+) serves as cofactor.

It carries out the reaction L-ornithine = L-proline + NH4(+). Its function is as follows. Catalyzes the conversion of ornithine to proline, with the release of ammonia. The chain is Ornithine cyclodeaminase from Methanopyrus kandleri (strain AV19 / DSM 6324 / JCM 9639 / NBRC 100938).